A 241-amino-acid polypeptide reads, in one-letter code: GDSL esterase/lipase At5g45920 (241 aa).

S12 acts as the Nucleophile in catalysis. Residues D189 and H192 contribute to the active site.

The protein belongs to the 'GDSL' lipolytic enzyme family.

This Arabidopsis thaliana (Mouse-ear cress) protein is GDSL esterase/lipase At5g45920.